The chain runs to 86 residues: Omega-theraphotoxin-Hhn1e (86 aa).

The first 21 residues, 1–21, serve as a signal peptide directing secretion; it reads MKSIVFVALFGLALLAVVCSA. The propeptide occupies 22-50; sequence SEGAHKELLKEVVRAMVVDKTDAVQAEER. Intrachain disulfides connect Cys52–Cys66 and Cys65–Cys78.

It belongs to the neurotoxin 10 (Hwtx-1) family. 17 (Hntx-9) subfamily. Expressed by the venom gland.

It localises to the secreted. Functionally, ion channel inhibitor. The protein is Omega-theraphotoxin-Hhn1e of Cyriopagopus hainanus (Chinese bird spider).